The chain runs to 185 residues: Ribosome-recycling factor (185 aa).

This sequence belongs to the RRF family.

Its subcellular location is the cytoplasm. Responsible for the release of ribosomes from messenger RNA at the termination of protein biosynthesis. May increase the efficiency of translation by recycling ribosomes from one round of translation to another. This is Ribosome-recycling factor from Baumannia cicadellinicola subsp. Homalodisca coagulata.